Consider the following 180-residue polypeptide: MANRLKEKYLKEVVPSLTEKFNYSSVMAVPKVDKIVLNMGVGDAVSNAKNLEKAAEELALISGQKPLITKAKKSIAGFRLREGVAIGAKVTLRGERMYEFLDKLVSVSLPRVRDFHGVPTKSFDGRGNYTLGVKEQLIFPEINFDDVDKTRGLDIVIVTTANTDEESRELLTGLGMPFAK.

Belongs to the universal ribosomal protein uL5 family. Part of the 50S ribosomal subunit; part of the 5S rRNA/L5/L18/L25 subcomplex. Contacts the 5S rRNA and the P site tRNA. Forms a bridge to the 30S subunit in the 70S ribosome.

Functionally, this is one of the proteins that bind and probably mediate the attachment of the 5S RNA into the large ribosomal subunit, where it forms part of the central protuberance. In the 70S ribosome it contacts protein S13 of the 30S subunit (bridge B1b), connecting the 2 subunits; this bridge is implicated in subunit movement. Contacts the P site tRNA; the 5S rRNA and some of its associated proteins might help stabilize positioning of ribosome-bound tRNAs. The sequence is that of Large ribosomal subunit protein uL5 from Streptococcus sanguinis (strain SK36).